The chain runs to 439 residues: Phosphoribosylamine--glycine ligase (439 aa).

One can recognise an ATP-grasp domain in the interval 109–317; sequence REFMERNKIP…LVEISERIID (209 aa). An ATP-binding site is contributed by 136–195; sequence IDEFGKPVVVKPLGLTGGKGVKVVGYQLKDNEEAKEYAEYLIRKDGKVLIEERTDGVEFT. Mg(2+)-binding residues include Q275, E287, and N289. 3 residues coordinate Mn(2+): Q275, E287, and N289.

This sequence belongs to the GARS family. Mg(2+) is required as a cofactor. Mn(2+) serves as cofactor.

It carries out the reaction 5-phospho-beta-D-ribosylamine + glycine + ATP = N(1)-(5-phospho-beta-D-ribosyl)glycinamide + ADP + phosphate + H(+). Its pathway is purine metabolism; IMP biosynthesis via de novo pathway; N(1)-(5-phospho-D-ribosyl)glycinamide from 5-phospho-alpha-D-ribose 1-diphosphate: step 2/2. The polypeptide is Phosphoribosylamine--glycine ligase (Pyrococcus furiosus (strain ATCC 43587 / DSM 3638 / JCM 8422 / Vc1)).